The primary structure comprises 367 residues: Di-N-acetylchitobiase (367 aa).

The N-terminal stretch at M1–A23 is a signal peptide. Residues E24 to L367 form the GH18 domain. E128 serves as the catalytic Proton donor. N-linked (GlcNAc...) asparagine glycans are attached at residues N178, N213, N247, and N284.

It belongs to the glycosyl hydrolase 18 family.

The protein localises to the lysosome. Involved in the degradation of asparagine-linked glycoproteins. Hydrolyze of N-acetyl-beta-D-glucosamine (1-4)N-acetylglucosamine chitobiose core from the reducing end of the bond, it requires prior cleavage by glycosylasparaginase. The sequence is that of Di-N-acetylchitobiase (Ctbs) from Rattus norvegicus (Rat).